The primary structure comprises 516 residues: D-aminopeptidase (516 aa).

The active-site Nucleophile is the serine 61. Lysine 64 functions as the Proton donor/acceptor in the catalytic mechanism. The segment at 476-486 (RRSMDAPAPGD) is important for specificity. Aspartate 480 lines the substrate pocket.

Belongs to the peptidase S12 family. In terms of assembly, homodimer.

The enzyme catalyses Release of an N-terminal D-amino acid from a peptide, Xaa-|-Yaa-, in which Xaa is preferably D-Ala, D-Ser or D-Thr. D-amino acid amides and methyl esters also are hydrolyzed, as is glycine amide.. With respect to regulation, inhibited by beta-lactam compounds such as 6-aminopenicillic acid, 7-aminocephalosporanic acid, benzylpenicillin and ampicillin. Inhibited by p-chloromercuribenzoate. In terms of biological role, hydrolyzes N-terminal residues in D-amino acid-containing peptides. This Cereibacter sphaeroides (strain KD131 / KCTC 12085) (Rhodobacter sphaeroides) protein is D-aminopeptidase.